The sequence spans 164 residues: Histone H1 (164 aa).

A compositionally biased stretch (polar residues) spans 1–10 (MAPRSSTSKS). A disordered region spans residues 1–164 (MAPRSSTSKS…KKSSKPAKKN (164 aa)). Residues 16–27 (KDHKKAPIKKAI) are compositionally biased toward basic residues. 2 positions are modified to phosphothreonine: Thr-47 and Thr-54. 3 stretches are compositionally biased toward basic and acidic residues: residues 49-61 (VKKD…ADTK), 69-89 (TMKE…GDKK), and 117-156 (TKKE…DAKK).

Cell-growth/division-associated phosphorylation by a CDC2-like kinase.

The protein resides in the nucleus. It is found in the chromosome. Functionally, histones H1 are necessary for the condensation of nucleosome chains into higher-order structures. In Tetrahymena thermophila (strain SB210), this protein is Histone H1 (HHO).